The sequence spans 284 residues: uncharacterized protein (284 aa).

The N-terminal stretch at 1–24 is a signal peptide; sequence MLYSRESRTTVLFLALVTSLTVLC. The Cytoplasmic portion of the chain corresponds to 25–84; it reads HSVDVTTVFTTSTITEITTVTAAPQPQNKAETALNTATNIIQTMQFLFNCAPFKWKGPLK. A helical membrane pass occupies residues 85-104; it reads ITSCALNFIVLLLTAWGYLL. At 105-284 the chain is on the extracellular side; that stretch reads KYLQENKLNS…SVHMYSSSLL (180 aa). N-linked (GlcNAc...) asparagine glycosylation is present at Asn-270.

It to yeast YNL019c.

The protein localises to the cell membrane. This is an uncharacterized protein from Saccharomyces cerevisiae (strain ATCC 204508 / S288c) (Baker's yeast).